Reading from the N-terminus, the 635-residue chain is MQQESTLLDKIDYPADLRNIPLEKLPQVCKEVRNYIIDTLSGVGGHFASNLGVVELTVALHYVFDTPKDRLIWDVGHQTYPHKILTGRKDRLKTVRKFNGLSGFPKREESPYDLYNTGHAGTSISQALGEAAARDLTKGEDYSVVAIIGDASIATGMALEAMNHAGHLKKDMIVILNDNYMSISKNVGSISNYLNNIITSHFYNHWKRVFYTFLKWLPIVGPAAERFFKKVEKGFKDVLTPGGLFEDLGFGYIGPEDGHDVIRLVNMLAKVKKMKGPILLHLITQKGKGYDPAERDPIKYHGVTPFRKEDGAMDSGDTSKIAYSKIVGRMLSILTEANPKIAAITPAMIEGSGLKEYAEKYPDHLFDVGIAEQHSVAFAGAMTNGSIIPYMCIYSTFLTRAIDQLVQDVSLMNLPVRFVIDRAGCVGPDGETHQGLFDLGYLLGLPNMDVFVPSNGQDMIDSLRWMETYDKAPIAIRFPKANVDLKTLDFYKEVDLRPGTFRVLKRGTDLALLSIGSMIDEAKKATEILESAGFSVTLIDLIWLRPLGVEALNEELSNVRRFVIIDESYVDAGASGYLLNRILPENLSKYVKTFGFPPEPIHHGERKEIIQAYRLDGASIAESVADVLKKNLIKP.

Residues His-77 and 118–120 (GHA) each bind thiamine diphosphate. Asp-150 provides a ligand contact to Mg(2+). Thiamine diphosphate contacts are provided by residues 151–152 (AS), Asn-179, Tyr-290, and Glu-372. Asn-179 lines the Mg(2+) pocket.

The protein belongs to the transketolase family. DXPS subfamily. In terms of assembly, homodimer. Requires Mg(2+) as cofactor. Thiamine diphosphate serves as cofactor.

The enzyme catalyses D-glyceraldehyde 3-phosphate + pyruvate + H(+) = 1-deoxy-D-xylulose 5-phosphate + CO2. The protein operates within metabolic intermediate biosynthesis; 1-deoxy-D-xylulose 5-phosphate biosynthesis; 1-deoxy-D-xylulose 5-phosphate from D-glyceraldehyde 3-phosphate and pyruvate: step 1/1. Catalyzes the acyloin condensation reaction between C atoms 2 and 3 of pyruvate and glyceraldehyde 3-phosphate to yield 1-deoxy-D-xylulose-5-phosphate (DXP). The chain is 1-deoxy-D-xylulose-5-phosphate synthase from Leptospira borgpetersenii serovar Hardjo-bovis (strain JB197).